Here is a 231-residue protein sequence, read N- to C-terminus: Putative cobalt transport protein CbiM 2 (231 aa).

The next 6 helical transmembrane spans lie at 8–28 (LPIGWCIFWAVLSAPFVIYGI), 41–61 (VLPLMAVCGAFVFVLSALKIP), 75–95 (LSAAFFGPFITSVLGTIVLLF), 108–128 (LGANVFSMAIAGPFIAWLVFV), 136–156 (VGIGVAVFITAAVANLVTYTV), and 176–196 (IAFAGIFAVTQIPLAIIEGII).

Belongs to the CbiM family. In terms of assembly, forms an energy-coupling factor (ECF) transporter complex composed of an ATP-binding protein (A component, CbiO), a transmembrane protein (T component, CbiQ) and 2 possible substrate-capture proteins (S components, CbiM and CbiN) of unknown stoichimetry.

It localises to the cell membrane. Its pathway is cofactor biosynthesis; adenosylcobalamin biosynthesis. Its function is as follows. Part of the energy-coupling factor (ECF) transporter complex CbiMNOQ involved in cobalt import. This Methanocorpusculum labreanum (strain ATCC 43576 / DSM 4855 / Z) protein is Putative cobalt transport protein CbiM 2.